Reading from the N-terminus, the 369-residue chain is Methylthioribose-1-phosphate isomerase (369 aa).

N-acetylmethionine is present on Met1. Arg158 carries the post-translational modification Omega-N-methylarginine. Asp248 functions as the Proton donor in the catalytic mechanism. Ser366 is modified (phosphoserine).

The protein belongs to the eIF-2B alpha/beta/delta subunits family. MtnA subfamily.

Its subcellular location is the cytoplasm. The protein localises to the nucleus. The catalysed reaction is 5-(methylsulfanyl)-alpha-D-ribose 1-phosphate = 5-(methylsulfanyl)-D-ribulose 1-phosphate. Its pathway is amino-acid biosynthesis; L-methionine biosynthesis via salvage pathway; L-methionine from S-methyl-5-thio-alpha-D-ribose 1-phosphate: step 1/6. Its function is as follows. Catalyzes the interconversion of methylthioribose-1-phosphate (MTR-1-P) into methylthioribulose-1-phosphate (MTRu-1-P). The protein is Methylthioribose-1-phosphate isomerase (Mri1) of Rattus norvegicus (Rat).